A 493-amino-acid chain; its full sequence is Guanosine-5'-triphosphate,3'-diphosphate pyrophosphatase (493 aa).

Belongs to the GppA/Ppx family. GppA subfamily.

It catalyses the reaction guanosine 3'-diphosphate 5'-triphosphate + H2O = guanosine 3',5'-bis(diphosphate) + phosphate + H(+). It participates in purine metabolism; ppGpp biosynthesis; ppGpp from GTP: step 2/2. Its function is as follows. Catalyzes the conversion of pppGpp to ppGpp. Guanosine pentaphosphate (pppGpp) is a cytoplasmic signaling molecule which together with ppGpp controls the 'stringent response', an adaptive process that allows bacteria to respond to amino acid starvation, resulting in the coordinated regulation of numerous cellular activities. The protein is Guanosine-5'-triphosphate,3'-diphosphate pyrophosphatase of Salmonella paratyphi A (strain ATCC 9150 / SARB42).